The primary structure comprises 1455 residues: Membrane-associated guanylate kinase, WW and PDZ domain-containing protein 2 (1455 aa).

Positions 17–101 (ESVIGRNPEG…PLRLKCVKQG (85 aa)) constitute a PDZ 1 domain. Residues 109 to 283 (RHYLNLRFQK…APVYSQPEEL (175 aa)) form the Guanylate kinase-like domain. A disordered region spans residues 205–306 (PGATPSAEGK…DNEEPDPLPD (102 aa)). Residues 241 to 252 (VVNGNGVVVTPE) are compositionally biased toward low complexity. The segment covering 281-296 (EELKEQMDDTKPTKPE) has biased composition (basic and acidic residues). 2 WW domains span residues 302–335 (DPLP…DPRL) and 348–381 (NELP…NPVL). The interval 302–381 (DPLPDNWEMA…RRTQFENPVL (80 aa)) is interaction with DDN. Phosphotyrosine is present on Tyr-362. PDZ domains lie at 426–510 (STTL…CRGY) and 605–683 (TLTI…HRGG). The residue at position 686 (Ser-686) is a Phosphoserine. Residues 778-860 (DVHLRRMESG…NGQVNLTVRR (83 aa)) form the PDZ 4 domain. At Tyr-827 the chain carries Phosphotyrosine. The segment at 869–913 (CPENGRSPGSVSTHHSSPRSDYATYTNSNHAAPSSNASPPEGFAS) is disordered. A phosphoserine mark is found at Ser-884 and Ser-885. The span at 895-908 (NSNHAAPSSNASPP) shows a compositional bias: low complexity. In terms of domain architecture, PDZ 5 spans 920–1010 (DVVIHRKENE…SVTLRIIPQE (91 aa)). The segment covering 1011–1040 (ELNSPTSAPSSEKQSPMAQQSPLAQQSPLA) has biased composition (polar residues). The interval 1011–1136 (ELNSPTSAPS…PDTRQYPLSD (126 aa)) is disordered. Phosphoserine is present on Ser-1014. Residues 1067 to 1083 (NSYRSEVKARQDVKPDI) show a composition bias toward basic and acidic residues. Residues 1147–1229 (TVDMEKGAKG…RVRLLLKRGT (83 aa)) enclose the PDZ 6 domain. The disordered stretch occupies residues 1231-1455 (QVPEYDEPAP…LKPGASAASR (225 aa)). A compositionally biased stretch (low complexity) spans 1238 to 1249 (PAPWSSPAAAAP). Over residues 1287–1299 (DIKREHDVRKPKE) the composition is skewed to basic and acidic residues. Composition is skewed to low complexity over residues 1346–1363 (EARA…AARA), 1399–1412 (ALEA…RAGP), and 1422–1433 (APARKAAVAPGP).

Belongs to the MAGUK family. As to quaternary structure, interacts (via its WW domains) with DRPLA. Interacts (via its second PDZ domain) with PTEN (via unphosphorylated C-terminus); this interaction diminishes the degradation rate of PTEN. Interacts (via guanylate kinase domain) with DLGAP1. Interacts (via the PDZ domains) with GRIN2A, GRID2 and NLGN1. Interacts with CTNND2, CTNNB1, MAGUIN-1, ACVR2A, SMAD2 and SMAD3. Part of a complex consisting of MAGI2/ARIP1, ACVR2A, ACVR1B and SMAD3. May interact with HTR2A. Interacts with IGSF9, RAPGEF2 and HTR4. Identified in a complex with ACTN4, CASK, IQGAP1, NPHS1, SPTAN1 and SPTBN1. Found in a complex, at least composed of KIDINS220, MAGI2, NTRK1 and RAPGEF2; the complex is mainly formed at late endosomes in a NGF-dependent manner. Interacts with RAPGEF2; the interaction occurs before or after nerve growth factor (NGF) stimulation. Interacts (via PDZ domain) with KIDINS220 (via C-terminal domain). Interacts with DDN. Interacts with DLL1. Found in a complex with IGSF9B and NLGN2; the interaction with IGSF9B is mediated via the PDZ 5 and PDZ 6 domains, while the interaction with NLGN2 is mediated via the WW1, WW2 and PDZ2 domains. Interacts (via PDZ 6 domain) with USH1G (via SAM domain); the interaction is triggered by phosphorylation of USH1G by CK2 and negatively regulates MAGI2-mediated endocytosis. As to expression, specifically expressed in brain.

The protein resides in the cytoplasm. The protein localises to the late endosome. It is found in the synapse. It localises to the synaptosome. Its subcellular location is the cell membrane. The protein resides in the cytoskeleton. The protein localises to the microtubule organizing center. It is found in the centrosome. It localises to the cell projection. Its subcellular location is the cilium. The protein resides in the centriole. The protein localises to the photoreceptor inner segment. It is found in the photoreceptor outer segment. Seems to act as a scaffold molecule at synaptic junctions by assembling neurotransmitter receptors and cell adhesion proteins. Plays a role in nerve growth factor (NGF)-induced recruitment of RAPGEF2 to late endosomes and neurite outgrowth. May play a role in regulating activin-mediated signaling in neuronal cells. Enhances the ability of PTEN to suppress AKT1 activation. Plays a role in receptor-mediated clathrin-dependent endocytosis which is required for ciliogenesis. This Homo sapiens (Human) protein is Membrane-associated guanylate kinase, WW and PDZ domain-containing protein 2 (MAGI2).